The primary structure comprises 588 residues: Proteasome-associated ATPase (588 aa).

Residues 1-10 (MAAHDDDMNR) are compositionally biased toward basic and acidic residues. Positions 1–23 (MAAHDDDMNRGIRPGRGSEDPAG) are disordered. Positions 47–94 (RILEERIVELQTNLAGVSAQNERLAGTLREARDQIVALKEEVDRLAQP) form a coiled coil. 276-281 (GCGKTL) serves as a coordination point for ATP. Residues 587-588 (YL) form a docks into pockets in the proteasome alpha-ring region.

Belongs to the AAA ATPase family. Homohexamer. Assembles into a hexameric ring structure that caps the 20S proteasome core. Strongly interacts with the prokaryotic ubiquitin-like protein Pup through a hydrophobic interface; the interacting region of ARC lies in its N-terminal coiled-coil domain. There is one Pup binding site per ARC hexamer ring. Upon ATP-binding, the C-terminus of ARC interacts with the alpha-rings of the proteasome core, possibly by binding to the intersubunit pockets.

The protein operates within protein degradation; proteasomal Pup-dependent pathway. Functionally, ATPase which is responsible for recognizing, binding, unfolding and translocation of pupylated proteins into the bacterial 20S proteasome core particle. May be essential for opening the gate of the 20S proteasome via an interaction with its C-terminus, thereby allowing substrate entry and access to the site of proteolysis. Thus, the C-termini of the proteasomal ATPase may function like a 'key in a lock' to induce gate opening and therefore regulate proteolysis. This is Proteasome-associated ATPase from Streptomyces coelicolor (strain ATCC BAA-471 / A3(2) / M145).